A 233-amino-acid chain; its full sequence is Small ribosomal subunit protein uS2 (233 aa).

Belongs to the universal ribosomal protein uS2 family.

This chain is Small ribosomal subunit protein uS2, found in Prochlorococcus marinus (strain MIT 9312).